The following is a 173-amino-acid chain: MLWFVAVCFAIASVSAMSPADVKKHTVESMKAVPVGRDKAQNGIDFYKFFFTHHKDLRKFFKGAENFGADDVQKSKRFEKQGTALLLAVHVLANVYDNQAVFHGFVRELMNRHEKRGVDPKLWKIFFDDVWVPFLESKGAKLSGDAKAAWKELNKNFNSEAQHQLEKLGLPHA.

Positions 1 to 16 (MLWFVAVCFAIASVSA) are cleaved as a signal peptide. The region spanning 17–166 (MSPADVKKHT…FNSEAQHQLE (150 aa)) is the Globin domain. Position 113 (His-113) interacts with heme b.

This sequence belongs to the globin family. In terms of tissue distribution, expressed only by adult nematodes in the gut.

Its subcellular location is the secreted. The protein resides in the extracellular space. In Nippostrongylus brasiliensis (Rat hookworm), this protein is Globin, cuticular isoform (GLBC).